Reading from the N-terminus, the 611-residue chain is Leucine aminopeptidase 2 (611 aa).

Residues 135–137 and 265–270 contribute to the a peptide site; these read QCQ and PYGGME. Position 294 (H294) interacts with Zn(2+). Residue E295 is the Proton acceptor of the active site. Zn(2+)-binding residues include H298 and E317. The active-site Proton donor is the Y383.

It belongs to the peptidase M1 family. The cofactor is Zn(2+).

The protein localises to the cytoplasm. It is found in the nucleus. The enzyme catalyses an epoxide + H2O = an ethanediol. In terms of biological role, aminopeptidase that preferentially cleaves di- and tripeptides. Also has low epoxide hydrolase activity (in vitro). Can hydrolyze the epoxide leukotriene LTA(4) but it forms preferentially 5,6-dihydroxy-7,9,11,14-eicosatetraenoic acid rather than the cytokine leukotriene B(4) as the product compared to the homologous mammalian enzyme (in vitro). In Chaetomium globosum (strain ATCC 6205 / CBS 148.51 / DSM 1962 / NBRC 6347 / NRRL 1970) (Soil fungus), this protein is Leucine aminopeptidase 2.